A 577-amino-acid chain; its full sequence is Arginine--tRNA ligase (577 aa).

The short motif at 122-132 (PNVAKEMHVGH) is the 'HIGH' region element.

The protein belongs to the class-I aminoacyl-tRNA synthetase family. As to quaternary structure, monomer.

It localises to the cytoplasm. It catalyses the reaction tRNA(Arg) + L-arginine + ATP = L-arginyl-tRNA(Arg) + AMP + diphosphate. This is Arginine--tRNA ligase from Salmonella schwarzengrund (strain CVM19633).